A 283-amino-acid chain; its full sequence is Small ribosomal subunit protein uS3 (283 aa).

The 69-residue stretch at 39-107 (VRAYLKTKLK…PVHVNIEEIR (69 aa)) folds into the KH type-2 domain. The disordered stretch occupies residues 209–283 (PSGEPPVDLT…GAVPAEKAGE (75 aa)). Residues 217 to 235 (LTKEDDTKRRGPRRDDGKP) show a composition bias toward basic and acidic residues. Residues 244–260 (PEGQPGAAAAPGAAPAA) show a composition bias toward low complexity.

Belongs to the universal ribosomal protein uS3 family. As to quaternary structure, part of the 30S ribosomal subunit. Forms a tight complex with proteins S10 and S14.

Binds the lower part of the 30S subunit head. Binds mRNA in the 70S ribosome, positioning it for translation. The polypeptide is Small ribosomal subunit protein uS3 (Herminiimonas arsenicoxydans).